We begin with the raw amino-acid sequence, 96 residues long: Putative pterin-4-alpha-carbinolamine dehydratase (96 aa).

The protein belongs to the pterin-4-alpha-carbinolamine dehydratase family.

It catalyses the reaction (4aS,6R)-4a-hydroxy-L-erythro-5,6,7,8-tetrahydrobiopterin = (6R)-L-erythro-6,7-dihydrobiopterin + H2O. This Prochlorococcus marinus subsp. pastoris (strain CCMP1986 / NIES-2087 / MED4) protein is Putative pterin-4-alpha-carbinolamine dehydratase.